Here is a 124-residue protein sequence, read N- to C-terminus: uncharacterized protein (124 aa).

A helical membrane pass occupies residues 83-100; sequence VTCFSLYTICYRIVLIWA.

Its subcellular location is the membrane. This is an uncharacterized protein from Saccharomyces cerevisiae (strain ATCC 204508 / S288c) (Baker's yeast).